The primary structure comprises 498 residues: Tryptophan decarboxylase TDC2 (498 aa).

Lysine 316 bears the N6-(pyridoxal phosphate)lysine mark.

This sequence belongs to the group II decarboxylase family. The cofactor is pyridoxal 5'-phosphate.

It carries out the reaction L-tryptophan + H(+) = tryptamine + CO2. Functionally, involved in the biosynthesis of tryptamine. Supplies tryptamine for the indole moiety of camptothecin (CPT), an anti-cancer monoterpene alkaloid. Represents a key step in monoterpene indole alkaloid biosynthesis. Is specific for tryptophan, and inactive against tyrosine, phenylalanine and 3,4-dihydroxyphenylalanine (dopa). The chain is Tryptophan decarboxylase TDC2 from Camptotheca acuminata (Happy tree).